The sequence spans 1488 residues: Phenolphthiocerol/phthiocerol polyketide synthase subunit E (1488 aa).

The Ketosynthase family 3 (KS3) domain occupies 5–438 (ENAIAVVGMA…GTNAHVVLEE (434 aa)). Residues cysteine 184, histidine 320, and histidine 361 each act as for beta-ketoacyl synthase activity in the active site. The tract at residues 551–868 (VFLFPGQGAQ…GELWSAGVEV (318 aa)) is acyltransferase. The For malonyltransferase activity role is filled by serine 641. The Carrier domain maps to 930-1004 (NGESQTEVTL…SLTAAVDASF (75 aa)). Serine 965 carries the O-(pantetheine 4'-phosphoryl)serine modification. 1286–1331 (EGVVAVELEGEGRSVLRPDVDLRRTVGWFTTYYPVPLACATGLGAL) contributes to the NADP(+) binding site.

It depends on NADP(+) as a cofactor. Pantetheine 4'-phosphate is required as a cofactor.

The enzyme catalyses icosanoyl-[(phenol)carboxyphthiodiolenone synthase] + 2 (S)-methylmalonyl-CoA + 3 malonyl-CoA + 5 NADPH + 10 H(+) = C32-carboxyphthiodiolenone-[(phenol)carboxyphthiodiolenone synthase] + 5 CO2 + 5 NADP(+) + 5 CoA + 2 H2O. It catalyses the reaction docosanoyl-[(phenol)carboxyphthiodiolenone synthase] + 2 (S)-methylmalonyl-CoA + 3 malonyl-CoA + 5 NADPH + 10 H(+) = C34-carboxyphthiodiolenone-[(phenol)carboxyphthiodiolenone synthase] + 5 CO2 + 5 NADP(+) + 5 CoA + 2 H2O. It carries out the reaction 17-(4-hydroxyphenyl)heptadecanoyl-[(phenol)carboxyphthiodiolenone synthase] + 2 (S)-methylmalonyl-CoA + 3 malonyl-CoA + 5 NADPH + 10 H(+) = C35-(phenol)carboxyphthiodiolenone-[(phenol)carboxyphthiodiolenone synthase] + 5 CO2 + 5 NADP(+) + 5 CoA + 2 H2O. The catalysed reaction is 19-(4-hydroxyphenyl)nonadecanoyl-[(phenol)carboxyphthiodiolenone synthase] + 2 (S)-methylmalonyl-CoA + 3 malonyl-CoA + 5 NADPH + 10 H(+) = C37-(phenol)carboxyphthiodiolenone-[(phenol)carboxyphthiodiolenone synthase] + 5 CO2 + 5 NADP(+) + 5 CoA + 2 H2O. The protein operates within lipid metabolism; fatty acid biosynthesis. In terms of biological role, part of the PpsABCDE complex involved in the biosynthesis of the lipid core common to phthiocerols and phenolphthiocerols by successive additions of malonyl-CoA or methylmalonyl-CoA extender units. PpsA can accept as substrate the activated forms of either icosanoyl (C20), docosanoyl (C22) or lignoceroyl (C24) groups from FadD26, or a (4-hydroxyphenyl)-C17 or (4-hydroxyphenyl)-C19 fatty acyl from FadD29. PpsA initiates the biosynthesis and extends its substrate using a malonyl-CoA extender unit. The PpsB and PpsC proteins add the second and third malonyl-CoA extender units. PpsD adds an (R)-methylmalonyl unit and PpsE adds a second (R)-methylmalonyl unit. The incorporation of the methylmalonyl units results in formation of two branched methyl groups in the elongated product. The sequence is that of Phenolphthiocerol/phthiocerol polyketide synthase subunit E (ppsE) from Mycobacterium bovis (strain ATCC BAA-935 / AF2122/97).